An 89-amino-acid polypeptide reads, in one-letter code: Serine-rich and transmembrane domain-containing 2 (89 aa).

An N-linked (GlcNAc...) asparagine glycan is attached at N11. A helical transmembrane segment spans residues 38–58 (YVGLFLSLLAILLILLFTMLL).

It is found in the membrane. This Mus musculus (Mouse) protein is Serine-rich and transmembrane domain-containing 2.